A 470-amino-acid chain; its full sequence is MGDGSSSRSNSSNSTSEKPEWLQQYNLVGKIGEGTYGLVFLARTKTPPKRPIAIKKFKQSKDGDGVSPTAIREIMLLREISHENVVKLVNVHINFADMSLYLAFDYAEYDLYEIIRHHRDKVGHSLNTYTVKSLLWQLLNGLNYLHSNWIIHRDLKPSNILVMGDAEEHGIVKIADFGLARIYQAPLKPLSDNGVVVTIWYRAPELLLGSKHYTSAVDMWAVGCIFAELLTLKPLFQGAEAKSSQNPFQLDQLDKIFKILGHPTMDKWPTLVNLPHWQNDVQHIQAHKYDSVGLHNVVHLNQKSPAYDLLSKMLEYDPLKRITASQALEHEYFRMDPLPGRNAFVASQPMEKNVNYPTRPVDTNTDFEGTTSINPPQAVAAGNVAGNMAGAHGMGSRSMPRPMVAHNMQRMQQSQGMMAYNFPAQAGLNPSVPLQQQRGMAQPHQQQQLRRKDPGMGMSGYAPPNKSRRL.

The Protein kinase domain occupies 25-333 (YNLVGKIGEG…ASQALEHEYF (309 aa)). ATP is bound by residues 31–39 (IGEGTYGLV) and Lys-55. Phosphotyrosine is present on Tyr-36. Asp-154 functions as the Proton acceptor in the catalytic mechanism. Positions 428–470 (LNPSVPLQQQRGMAQPHQQQQLRRKDPGMGMSGYAPPNKSRRL) are disordered. The span at 432 to 448 (VPLQQQRGMAQPHQQQQ) shows a compositional bias: polar residues.

This sequence belongs to the protein kinase superfamily. CMGC Ser/Thr protein kinase family. CDC2/CDKX subfamily. As to quaternary structure, interacts with MED14, HDA19 and LUG. Interacts with KIN10. As to expression, expressed in roots, leaves and stems. Expressed in young dividing tissue, such as shoot and root tips, lateral root primordia, young leaves and flowers. Expressed in the inflorescence meristem, inflorescence stem and young flowers.

It is found in the nucleus. It catalyses the reaction L-seryl-[protein] + ATP = O-phospho-L-seryl-[protein] + ADP + H(+). The enzyme catalyses L-threonyl-[protein] + ATP = O-phospho-L-threonyl-[protein] + ADP + H(+). The catalysed reaction is [DNA-directed RNA polymerase] + ATP = phospho-[DNA-directed RNA polymerase] + ADP + H(+). In terms of biological role, involved in cell differentiation. Required for the specification of stamen and carpel identities and for the proper termination of stem cells in the floral meristem. The sequence is that of Cyclin-dependent kinase E-1 (CDKE-1) from Arabidopsis thaliana (Mouse-ear cress).